Reading from the N-terminus, the 245-residue chain is Ribonuclease PH (245 aa).

Residues Arg-86 and 124 to 126 (GTR) each bind phosphate.

The protein belongs to the RNase PH family. In terms of assembly, homohexameric ring arranged as a trimer of dimers.

The enzyme catalyses tRNA(n+1) + phosphate = tRNA(n) + a ribonucleoside 5'-diphosphate. Phosphorolytic 3'-5' exoribonuclease that plays an important role in tRNA 3'-end maturation. Removes nucleotide residues following the 3'-CCA terminus of tRNAs; can also add nucleotides to the ends of RNA molecules by using nucleoside diphosphates as substrates, but this may not be physiologically important. Probably plays a role in initiation of 16S rRNA degradation (leading to ribosome degradation) during starvation. The polypeptide is Ribonuclease PH (Bacillus cereus (strain B4264)).